The following is a 191-amino-acid chain: Lipoprotein signal peptidase (191 aa).

3 helical membrane-spanning segments follow: residues 26 to 46, 84 to 104, and 110 to 130; these read VWFPAVLVLVLIALDQWLKAW, AVPLALGRILVGLGILSYLLW, and FLTVVLSMIAAGAIGNSIDGL. Residues D137 and D163 contribute to the active site. The chain crosses the membrane as a helical span at residues 156–176; it reads FPIFNIADMCVVGGTILLLVA.

Belongs to the peptidase A8 family.

The protein resides in the cell membrane. It catalyses the reaction Release of signal peptides from bacterial membrane prolipoproteins. Hydrolyzes -Xaa-Yaa-Zaa-|-(S,diacylglyceryl)Cys-, in which Xaa is hydrophobic (preferably Leu), and Yaa (Ala or Ser) and Zaa (Gly or Ala) have small, neutral side chains.. It participates in protein modification; lipoprotein biosynthesis (signal peptide cleavage). This protein specifically catalyzes the removal of signal peptides from prolipoproteins. The chain is Lipoprotein signal peptidase from Deinococcus radiodurans (strain ATCC 13939 / DSM 20539 / JCM 16871 / CCUG 27074 / LMG 4051 / NBRC 15346 / NCIMB 9279 / VKM B-1422 / R1).